Reading from the N-terminus, the 82-residue chain is Beta-neurotoxin Css9 (82 aa).

Residues 1 to 17 (MKLLMLIVALMIIGVQS) form the signal peptide. Residues 18-81 (KDGYPMDHKG…VWDRATNKCR (64 aa)) form the LCN-type CS-alpha/beta domain. Disulfide bonds link Cys-28/Cys-80, Cys-32/Cys-54, Cys-39/Cys-61, and Cys-43/Cys-63.

The protein belongs to the long (4 C-C) scorpion toxin superfamily. Sodium channel inhibitor family. Beta subfamily. As to expression, expressed by the venom gland.

The protein localises to the secreted. In terms of biological role, beta toxins bind voltage-independently at site-4 of sodium channels (Nav) and shift the voltage of activation toward more negative potentials thereby affecting sodium channel activation and promoting spontaneous and repetitive firing. This toxin compete with high affinity with 125I-Css4 bound on rat brain synaptosome and may bind with high affinity to Nav1.1/SCN1A, Nav1.2/SCN2A and Nav1.6/SCN8A. This Centruroides suffusus (Durango bark scorpion) protein is Beta-neurotoxin Css9.